A 551-amino-acid chain; its full sequence is Cleavage and polyadenylation specificity factor subunit 6 (551 aa).

The necessary for interaction with NXF1 stretch occupies residues 1–213; sequence MADGVDHIDI…RGRFPGAVPG (213 aa). Positions 81-161 constitute an RRM domain; that stretch reads IALYIGNLTW…QSPVVTPCNK (81 aa). A necessary for interaction with NUDT21/CPSF5 region spans residues 81-161; that stretch reads IALYIGNLTW…QSPVVTPCNK (81 aa). Positions 81–161 are necessary for nuclear paraspeckles localization; sequence IALYIGNLTW…QSPVVTPCNK (81 aa). A Phosphothreonine modification is found at Thr-157. Over residues 169 to 180 the composition is skewed to polar residues; it reads MQSRKTTQSGQM. Disordered stretches follow at residues 169–411 and 477–551; these read MQSR…PLSE and LHGI…YRHR. Gly residues predominate over residues 184–193; that stretch reads GKAGPPGGGS. A GAR motif is present at residues 202 to 206; the sequence is RGRGR. Residues 207 to 219 show a composition bias toward low complexity; sequence FPGAVPGGDRFPG. Composition is skewed to pro residues over residues 220 to 265, 285 to 366, and 377 to 388; these read PAGP…PLAG, GQPP…PPPT, and GPPPTDPYGRPP. Basic and acidic residues predominate over residues 389-404; sequence PYDRGDYGPPGREMDT. Thr-404 and Thr-407 each carry phosphothreonine. The segment at 404 to 551 is sufficient for nuclear speckle localization; that stretch reads TARTPLSEAE…RDREREYRHR (148 aa). Positions 405 to 551 are necessary for RNA-binding; sequence ARTPLSEAEF…RDREREYRHR (147 aa). Residues 481–551 form a necessary for interaction with SRSF3, SRSF7 and TRA2B/SFRS10 region; that stretch reads ESKSYGSGSR…RDREREYRHR (71 aa). A compositionally biased stretch (basic and acidic residues) spans 489–503; sequence SRRERSRERDHSRSR. Residues 490–551 are arg/Ser-rich domain; the sequence is RRERSRERDH…RDREREYRHR (62 aa). Phosphoserine occurs at positions 494, 500, 511, 513, and 525. Residues 504 to 514 show a composition bias toward basic residues; the sequence is EKSRRHKSRSR. Residues 510-551 form a sufficient for nuclear targeting region; the sequence is KSRSRDRHDDYYRERSRERERHRDRDRDRDRERDREREYRHR. A compositionally biased stretch (basic and acidic residues) spans 515–551; the sequence is DRHDDYYRERSRERERHRDRDRDRDRERDREREYRHR.

Belongs to the RRM CPSF6/7 family. As to quaternary structure, component of the cleavage factor Im (CFIm) complex which is a heterotetramer composed of two subunits of NUDT21/CPSF5 and two subunits of CPSF6 or CPSF7 or a heterodimer of CPSF6 and CPSF7. The cleavage factor Im (CFIm) complex associates with the CPSF and CSTF complexes to promote the assembly of the core mRNA 3'-processing machinery. Associates with the exon junction complex (EJC). Associates with the 80S ribosome particle. Interacts (via the RRM domain) with NUDT21/CPSF5; this interaction is direct and enhances binding to RNA. Interacts (via Arg/Ser-rich domain) with FIP1L1 (preferentially via unphosphorylated form and Arg/Glu/Asp-rich domain); this interaction mediates, at least in part, the interaction between the CFIm and CPSF complexes and may be inhibited by CPSF6 hyper-phosphorylation. Interacts (via N-terminus) with NXF1; this interaction is direct. Interacts with SRSF3. Interacts with SRSF7. Interacts with SNRNP70. Interacts with TRA2B/SFRS10. Interacts with UPF1. Interacts with UPF3B. Interacts with VIRMA. Interacts (via Arg/Ser-rich domain) with TNPO3; promoting nuclear import of CPSF6 independently of its phosphorylation status. Interacts with YTHDC1. In terms of processing, phosphorylated. Phosphorylated in the Arg/Ser-rich domain by SRPK1, in vitro. Post-translationally, symmetrically dimethylated on arginine residues by PRMT5 in a WDR77- and CLNS1A-dependent manner. Asymmetrically dimethylated on arginine residues by PRMT1. Symmetrically dimethylated on arginine residues in the GAR motif by PRMT5 in a WDR77- and CLNS1A-dependent manner. Asymmetrically dimethylated on arginine residues in the GAR motif by PRMT1. Expressed in testis. Expressed in male germ cells (at protein level).

The protein resides in the nucleus. It localises to the nucleoplasm. The protein localises to the nucleus speckle. It is found in the cytoplasm. Functionally, component of the cleavage factor Im (CFIm) complex that functions as an activator of the pre-mRNA 3'-end cleavage and polyadenylation processing required for the maturation of pre-mRNA into functional mRNAs. CFIm contributes to the recruitment of multiprotein complexes on specific sequences on the pre-mRNA 3'-end, so called cleavage and polyadenylation signals (pA signals). Most pre-mRNAs contain multiple pA signals, resulting in alternative cleavage and polyadenylation (APA) producing mRNAs with variable 3'-end formation. The CFIm complex acts as a key regulator of cleavage and polyadenylation site choice during APA through its binding to 5'-UGUA-3' elements localized in the 3'-untranslated region (UTR) for a huge number of pre-mRNAs. CPSF6 enhances NUDT21/CPSF5 binding to 5'-UGUA-3' elements localized upstream of pA signals and promotes RNA looping, and hence activates directly the mRNA 3'-processing machinery. Plays a role in mRNA export. In Mus musculus (Mouse), this protein is Cleavage and polyadenylation specificity factor subunit 6.